We begin with the raw amino-acid sequence, 453 residues long: UDP-N-acetylmuramoylalanine--D-glutamate ligase (453 aa).

119–125 (GSNGKTT) contributes to the ATP binding site.

It belongs to the MurCDEF family.

Its subcellular location is the cytoplasm. The catalysed reaction is UDP-N-acetyl-alpha-D-muramoyl-L-alanine + D-glutamate + ATP = UDP-N-acetyl-alpha-D-muramoyl-L-alanyl-D-glutamate + ADP + phosphate + H(+). It participates in cell wall biogenesis; peptidoglycan biosynthesis. Its function is as follows. Cell wall formation. Catalyzes the addition of glutamate to the nucleotide precursor UDP-N-acetylmuramoyl-L-alanine (UMA). The chain is UDP-N-acetylmuramoylalanine--D-glutamate ligase from Streptococcus uberis (strain ATCC BAA-854 / 0140J).